A 236-amino-acid polypeptide reads, in one-letter code: Phosphoribosylaminoimidazole-succinocarboxamide synthase (236 aa).

The protein belongs to the SAICAR synthetase family.

It catalyses the reaction 5-amino-1-(5-phospho-D-ribosyl)imidazole-4-carboxylate + L-aspartate + ATP = (2S)-2-[5-amino-1-(5-phospho-beta-D-ribosyl)imidazole-4-carboxamido]succinate + ADP + phosphate + 2 H(+). It participates in purine metabolism; IMP biosynthesis via de novo pathway; 5-amino-1-(5-phospho-D-ribosyl)imidazole-4-carboxamide from 5-amino-1-(5-phospho-D-ribosyl)imidazole-4-carboxylate: step 1/2. This is Phosphoribosylaminoimidazole-succinocarboxamide synthase from Rickettsia felis (strain ATCC VR-1525 / URRWXCal2) (Rickettsia azadi).